A 175-amino-acid polypeptide reads, in one-letter code: Peptide methionine sulfoxide reductase MsrA (175 aa).

Residue C10 is part of the active site.

It belongs to the MsrA Met sulfoxide reductase family.

The enzyme catalyses L-methionyl-[protein] + [thioredoxin]-disulfide + H2O = L-methionyl-(S)-S-oxide-[protein] + [thioredoxin]-dithiol. The catalysed reaction is [thioredoxin]-disulfide + L-methionine + H2O = L-methionine (S)-S-oxide + [thioredoxin]-dithiol. Has an important function as a repair enzyme for proteins that have been inactivated by oxidation. Catalyzes the reversible oxidation-reduction of methionine sulfoxide in proteins to methionine. This Clavibacter sepedonicus (Clavibacter michiganensis subsp. sepedonicus) protein is Peptide methionine sulfoxide reductase MsrA.